The following is a 165-amino-acid chain: Phosphopantetheine adenylyltransferase (165 aa).

Ser9 is a binding site for substrate. Residues 9–10 and His17 each bind ATP; that span reads SF. The substrate site is built by Lys41, Val73, and Arg87. ATP-binding positions include 88–90, Glu98, and 123–129; these read GLR and FTLLSSS.

The protein belongs to the bacterial CoaD family. Homohexamer. It depends on Mg(2+) as a cofactor.

The protein localises to the cytoplasm. The enzyme catalyses (R)-4'-phosphopantetheine + ATP + H(+) = 3'-dephospho-CoA + diphosphate. It participates in cofactor biosynthesis; coenzyme A biosynthesis; CoA from (R)-pantothenate: step 4/5. In terms of biological role, reversibly transfers an adenylyl group from ATP to 4'-phosphopantetheine, yielding dephospho-CoA (dPCoA) and pyrophosphate. The sequence is that of Phosphopantetheine adenylyltransferase from Herpetosiphon aurantiacus (strain ATCC 23779 / DSM 785 / 114-95).